Consider the following 393-residue polypeptide: PxcA-like protein (393 aa).

Transmembrane regions (helical) follow at residues 173–193 (FLIVLIFIPLTVQILTKNLVF), 271–291 (IVNLLADIAGLVAFVVLIIVF), 306–326 (FLALNDITKVFIFILLTDMFV), and 354–374 (VYIFIATVPVFLDSLFKLLIF).

It belongs to the CemA family. PxcL subfamily.

The protein resides in the cell inner membrane. Functionally, together with PxcA, contributes to transient H(+) uptake following dark to light transition. Required for H(+) influx to activate the Calvin-Benson-Bassham cycle. May also be involved in CO(2) transport. This is PxcA-like protein from Synechocystis sp. (strain ATCC 27184 / PCC 6803 / Kazusa).